Consider the following 341-residue polypeptide: Tetraacyldisaccharide 4'-kinase (341 aa).

64 to 71 (AVGGSGKT) lines the ATP pocket.

It belongs to the LpxK family.

It carries out the reaction a lipid A disaccharide + ATP = a lipid IVA + ADP + H(+). The protein operates within glycolipid biosynthesis; lipid IV(A) biosynthesis; lipid IV(A) from (3R)-3-hydroxytetradecanoyl-[acyl-carrier-protein] and UDP-N-acetyl-alpha-D-glucosamine: step 6/6. Its function is as follows. Transfers the gamma-phosphate of ATP to the 4'-position of a tetraacyldisaccharide 1-phosphate intermediate (termed DS-1-P) to form tetraacyldisaccharide 1,4'-bis-phosphate (lipid IVA). In Azoarcus sp. (strain BH72), this protein is Tetraacyldisaccharide 4'-kinase.